The chain runs to 337 residues: MKRIAVLTSGGDAPGMNAAIRAVVRKAISEGMEVYGVNHGYAGLVAGDIFPISSKGVGDKISRGGTFLYSARYPEFANLEGQLAGIEQLKKHGIEGVVVIGGDGSYHGAMRLTEHGFPAVGIPGTIDNDIAGTDYTIGFDTAVNTAVEAIDKLRDTSSSHGRTFVVEVMGRNAGDIALWAGIASGADQIIVPEEEFNIQQVVKTIDDDFKKQGKNHHIIVLAEGVMSGDQFAQELKAAGNTSDLRVTNLGHILRGGSPTARDRVIASWMGSHAVELLKQGKGGFAVGIHNEELVESPILGSAEEGALFSLGEDGKIIVNNPHRARLDFAKLNRSLSR.

Gly-11 is a binding site for ATP. An ADP-binding site is contributed by 21–25 (RAVVR). Residues 72 to 73 (RY) and 102 to 105 (GDGS) each bind ATP. Asp-103 serves as a coordination point for Mg(2+). 125–127 (TID) is a binding site for substrate. Residue Asp-127 is the Proton acceptor of the active site. Residue Arg-154 participates in ADP binding. Substrate contacts are provided by residues Arg-162 and 169 to 171 (MGR). Residues 185–187 (GAD) and 214–216 (KNH) each bind ADP. Residues Glu-223, Arg-245, and 251-254 (HILR) each bind substrate.

The protein belongs to the phosphofructokinase type A (PFKA) family. ATP-dependent PFK group I subfamily. Prokaryotic clade 'B1' sub-subfamily. Homotetramer. The cofactor is Mg(2+).

Its subcellular location is the cytoplasm. It carries out the reaction beta-D-fructose 6-phosphate + ATP = beta-D-fructose 1,6-bisphosphate + ADP + H(+). It functions in the pathway carbohydrate degradation; glycolysis; D-glyceraldehyde 3-phosphate and glycerone phosphate from D-glucose: step 3/4. With respect to regulation, allosterically activated by ADP and other diphosphonucleosides, and allosterically inhibited by phosphoenolpyruvate. In terms of biological role, catalyzes the phosphorylation of D-fructose 6-phosphate to fructose 1,6-bisphosphate by ATP, the first committing step of glycolysis. The chain is ATP-dependent 6-phosphofructokinase from Streptococcus uberis (strain ATCC BAA-854 / 0140J).